The following is a 446-amino-acid chain: Cobalamin biosynthesis protein CbiHC (446 aa).

The tract at residues 1–246 (MLLLPSRGKL…MFTPRGYSNK (246 aa)) is cobalt-factor III C(17)-methyltransferase. The interval 247–446 (YNIGEKRRAE…CLIEHADRPD (200 aa)) is cobalt-precorrin-8 methylmutase.

It in the N-terminal section; belongs to the precorrin methyltransferase family. The protein in the C-terminal section; belongs to the CobH family.

It catalyses the reaction Co(II)-factor III + S-adenosyl-L-methionine + H(+) = Co(II)-factor IV + S-adenosyl-L-homocysteine. It carries out the reaction Co-precorrin-8X = cob(II)yrinate. Its pathway is cofactor biosynthesis; adenosylcobalamin biosynthesis; cob(II)yrinate a,c-diamide from sirohydrochlorin (anaerobic route): step 3/10. It participates in cofactor biosynthesis; adenosylcobalamin biosynthesis; cob(II)yrinate a,c-diamide from sirohydrochlorin (anaerobic route): step 9/10. Functionally, bifunctional enzyme with a methyltransferase domain that catalyzes the ring contraction and methylation of C-17 in cobalt-factor III to form cobalt-factor IV, and an isomerase domain that catalyzes the conversion of cobalt-precorrin-8 to cobyrinate. This chain is Cobalamin biosynthesis protein CbiHC (cbiHC), found in Archaeoglobus fulgidus (strain ATCC 49558 / DSM 4304 / JCM 9628 / NBRC 100126 / VC-16).